The sequence spans 945 residues: Isoleucine--tRNA ligase 1 (945 aa).

A 'HIGH' region motif is present at residues 66–76; it reads PYANGDIHLGH. Glu581 contacts L-isoleucyl-5'-AMP. The 'KMSKS' region motif lies at 622–626; sequence KMSKS. Lys625 is a binding site for ATP. Zn(2+) contacts are provided by Cys908, Cys911, Cys928, and Cys931.

It belongs to the class-I aminoacyl-tRNA synthetase family. IleS type 1 subfamily. Monomer. Zn(2+) serves as cofactor.

It is found in the cytoplasm. It carries out the reaction tRNA(Ile) + L-isoleucine + ATP = L-isoleucyl-tRNA(Ile) + AMP + diphosphate. Its function is as follows. Catalyzes the attachment of isoleucine to tRNA(Ile). As IleRS can inadvertently accommodate and process structurally similar amino acids such as valine, to avoid such errors it has two additional distinct tRNA(Ile)-dependent editing activities. One activity is designated as 'pretransfer' editing and involves the hydrolysis of activated Val-AMP. The other activity is designated 'posttransfer' editing and involves deacylation of mischarged Val-tRNA(Ile). The polypeptide is Isoleucine--tRNA ligase 1 (Burkholderia pseudomallei (strain K96243)).